The primary structure comprises 154 residues: Ribosomal RNA large subunit methyltransferase H (154 aa).

S-adenosyl-L-methionine contacts are provided by residues Gly103 and 122-127 (FSKLTF).

Belongs to the RNA methyltransferase RlmH family. Homodimer.

The protein localises to the cytoplasm. The catalysed reaction is pseudouridine(1915) in 23S rRNA + S-adenosyl-L-methionine = N(3)-methylpseudouridine(1915) in 23S rRNA + S-adenosyl-L-homocysteine + H(+). Functionally, specifically methylates the pseudouridine at position 1915 (m3Psi1915) in 23S rRNA. This chain is Ribosomal RNA large subunit methyltransferase H, found in Caldicellulosiruptor saccharolyticus (strain ATCC 43494 / DSM 8903 / Tp8T 6331).